The chain runs to 908 residues: DNA mismatch repair protein MutS (908 aa).

Residue 629-636 coordinates ATP; sequence GPNMAGKS. The segment at 822-863 is disordered; that stretch reads ADEADGAPSEDPPSEDPPSGDGVRAKKGEADAVPDLEDSQAN.

This sequence belongs to the DNA mismatch repair MutS family.

This protein is involved in the repair of mismatches in DNA. It is possible that it carries out the mismatch recognition step. This protein has a weak ATPase activity. The protein is DNA mismatch repair protein MutS of Salinibacter ruber (strain DSM 13855 / M31).